Consider the following 783-residue polypeptide: Probable potassium transporter 2 (783 aa).

At 1 to 21 (MDAEAGVGGADQLPWRQHYRN) the chain is on the cytoplasmic side. Residues 22 to 42 (LLLLAYQSFGVVYGDLSTSPL) traverse the membrane as a helical segment. At 43-61 (YVYKSTFSGRLRRYQDEQT) the chain is on the extracellular side. A helical membrane pass occupies residues 62–82 (VFGVLSLIFWTFTLIPLLKYV). Topologically, residues 83-152 (TIVLSADDNG…FMEKHKNART (70 aa)) are cytoplasmic. A helical transmembrane segment spans residues 153–173 (VLLLIVLCGASMMIGDGILTP). Residues 174–189 (AISVLSSMSGLKVRAT) lie on the Extracellular side of the membrane. The helical transmembrane segment at 190–210 (GLHDRSVVLLSCIVLVGLFAL) threads the bilayer. The Cytoplasmic segment spans residues 211 to 217 (QHRGTQK). A helical transmembrane segment spans residues 218-238 (VAFMFAPIVVIWLFCIGGIGL). Residues 239-268 (YNIIHWNPRIYQALSPYYIVKFFRTTGKDG) are Extracellular-facing. Residues 269 to 289 (WIALGGILLSMTGCEAMFADL) form a helical membrane-spanning segment. Topologically, residues 290–298 (GHFTSASVR) are cytoplasmic. The helical transmembrane segment at 299–319 (LAFITIIYPCLILQYMGQAAF) threads the bilayer. Residues 320 to 338 (LSKNILDMPTGFYDSIPGP) are Extracellular-facing. A helical transmembrane segment spans residues 339 to 359 (IFWPVFVVATLAAVVGSQAVI). The Cytoplasmic segment spans residues 360–390 (SATFSIVKQCHSLGCFPRVKVVHTSRWIYGQ). The helical transmembrane segment at 391–411 (IYIPEINWILMVLCVAVTVAF) threads the bilayer. The Extracellular portion of the chain corresponds to 412 to 422 (RDITLIGNAYG). Residues 423 to 443 (VACMTVMFVTTFLMALIMIFV) traverse the membrane as a helical segment. Topologically, residues 444 to 447 (WQKN) are cytoplasmic. A helical transmembrane segment spans residues 448-468 (IIFALSFFLLFGSVEVVYLSS). The Extracellular portion of the chain corresponds to 469-475 (SLMKVTQ). The helical transmembrane segment at 476–496 (GGWVPLVLALIFMSVMYIWHY) threads the bilayer. The Cytoplasmic portion of the chain corresponds to 497 to 783 (GTRKKYQYDL…LIEVGMAYQV (287 aa)). The segment at 662-691 (DLADSMTMRSTKSESLRSLQSSYEQESPNV) is disordered. Residues 677 to 691 (LRSLQSSYEQESPNV) show a composition bias toward polar residues.

It belongs to the HAK/KUP transporter (TC 2.A.72.3) family.

Its subcellular location is the cell membrane. It carries out the reaction K(+)(in) = K(+)(out). It catalyses the reaction Na(+)(in) = Na(+)(out). Its function is as follows. High-affinity potassium transporter. Can transport sodium under high sodium and low potassium concentrations in the extracellular environment. In Oryza sativa subsp. japonica (Rice), this protein is Probable potassium transporter 2 (HAK2).